Reading from the N-terminus, the 51-residue chain is Small ribosomal subunit protein uS13 (51 aa).

The protein belongs to the universal ribosomal protein uS13 family. Part of the 30S ribosomal subunit. Forms a loose heterodimer with protein S19. Forms two bridges to the 50S subunit in the 70S ribosome.

Its function is as follows. Located at the top of the head of the 30S subunit, it contacts several helices of the 16S rRNA. In the 70S ribosome it contacts the 23S rRNA (bridge B1a) and protein L5 of the 50S subunit (bridge B1b), connecting the 2 subunits; these bridges are implicated in subunit movement. Contacts the tRNAs in the A and P-sites. The polypeptide is Small ribosomal subunit protein uS13 (rpsM) (Lactococcus lactis subsp. cremoris (Streptococcus cremoris)).